The primary structure comprises 968 residues: Probable histidine kinase 1 (968 aa).

Coiled coils occupy residues 89–120 and 169–204; these read LLKEQIGLLCQQRKEIEQRKQQILEEQQFQDE and KERAMQLEKTLEASLQRERSLEEKLEENIKNLQSHT. Positions 372–655 constitute a Histidine kinase domain; that stretch reads TMSHEIRSPL…TFSFVLPCKI (284 aa). The residue at position 375 (His-375) is a Phosphohistidine; by autocatalysis. A disordered region spans residues 737 to 757; that stretch reads STNSASTAHQSNGPSVSRTNK. Residues 738-754 show a composition bias toward polar residues; sequence TNSASTAHQSNGPSVSR. The region spanning 818 to 965 is the Response regulatory domain; that stretch reads KILLVEDNKV…NIKECLQQYL (148 aa). Asp-867 carries the 4-aspartylphosphate modification.

In terms of processing, activation probably requires a transfer of a phosphate group between a His in the transmitter domain and an Asp of the receiver domain.

It carries out the reaction ATP + protein L-histidine = ADP + protein N-phospho-L-histidine.. In terms of biological role, cytokinin receptor related to bacterial two-component regulators. Functions as a histidine kinase and transmits the stress signal to a downstream MAPK cascade. In Oryza sativa subsp. indica (Rice), this protein is Probable histidine kinase 1.